We begin with the raw amino-acid sequence, 245 residues long: Uridylate kinase (245 aa).

18–21 is an ATP binding site; it reads KLSG. Gly60 contributes to the UMP binding site. Residues Gly61 and Arg65 each coordinate ATP. UMP is bound by residues Asp80 and 141–148; that span reads TGNPFFTT. 3 residues coordinate ATP: Thr168, Tyr174, and Asp177.

Belongs to the UMP kinase family. Homohexamer.

Its subcellular location is the cytoplasm. The catalysed reaction is UMP + ATP = UDP + ADP. Its pathway is pyrimidine metabolism; CTP biosynthesis via de novo pathway; UDP from UMP (UMPK route): step 1/1. Its activity is regulated as follows. Inhibited by UTP. Catalyzes the reversible phosphorylation of UMP to UDP. The sequence is that of Uridylate kinase from Pseudomonas paraeruginosa (strain DSM 24068 / PA7) (Pseudomonas aeruginosa (strain PA7)).